Consider the following 336-residue polypeptide: N-((2S)-2-amino-2-carboxyethyl)-L-glutamate dehydrogenase (336 aa).

The Proton donor/acceptor role is filled by lysine 78. NAD(+) contacts are provided by arginine 122 and lysine 242.

Belongs to the ornithine cyclodeaminase/mu-crystallin family. Homodimer.

The catalysed reaction is N-[(2S)-2-amino-2-carboxyethyl]-L-glutamate + NAD(+) + H2O = (S)-2,3-diaminopropanoate + 2-oxoglutarate + NADH + H(+). The protein operates within siderophore biosynthesis. Catalyzes the hydrolysis of N-((2S)-2-amino-2-carboxyethyl)-L-glutamate (ACEGA) to form L-2,3-diaminopropionic acid and 2-oxoglutarate. Involved in the biosynthesis of L-2,3-diaminopropionic acid (L-Dap), a precursor of staphyloferrin B and antibiotics. This is N-((2S)-2-amino-2-carboxyethyl)-L-glutamate dehydrogenase from Staphylococcus aureus (strain NCTC 8325 / PS 47).